Consider the following 194-residue polypeptide: 3-isopropylmalate dehydratase small subunit (194 aa).

Belongs to the LeuD family. LeuD type 1 subfamily. In terms of assembly, heterodimer of LeuC and LeuD.

The enzyme catalyses (2R,3S)-3-isopropylmalate = (2S)-2-isopropylmalate. Its pathway is amino-acid biosynthesis; L-leucine biosynthesis; L-leucine from 3-methyl-2-oxobutanoate: step 2/4. In terms of biological role, catalyzes the isomerization between 2-isopropylmalate and 3-isopropylmalate, via the formation of 2-isopropylmaleate. The polypeptide is 3-isopropylmalate dehydratase small subunit (Leuconostoc mesenteroides subsp. mesenteroides (strain ATCC 8293 / DSM 20343 / BCRC 11652 / CCM 1803 / JCM 6124 / NCDO 523 / NBRC 100496 / NCIMB 8023 / NCTC 12954 / NRRL B-1118 / 37Y)).